The chain runs to 259 residues: Hemin import ATP-binding protein HmuV (259 aa).

The region spanning 6–242 is the ABC transporter domain; that stretch reads IQGRDLCVTY…ERIEQVYGYQ (237 aa). 38 to 45 contacts ATP; sequence GPNGAGKS.

It belongs to the ABC transporter superfamily. Heme (hemin) importer (TC 3.A.1.14.5) family. The complex is composed of two ATP-binding proteins (HmuV), two transmembrane proteins (HmuU) and a solute-binding protein (HmuT).

It localises to the cell inner membrane. Its function is as follows. Part of the ABC transporter complex HmuTUV involved in hemin import. Responsible for energy coupling to the transport system. In Vibrio cholerae serotype O1 (strain ATCC 39315 / El Tor Inaba N16961), this protein is Hemin import ATP-binding protein HmuV.